We begin with the raw amino-acid sequence, 61 residues long: Small ribosomal subunit protein uS14B (61 aa).

Residues Cys-24, Cys-27, Cys-40, and Cys-43 each coordinate Zn(2+).

Belongs to the universal ribosomal protein uS14 family. Zinc-binding uS14 subfamily. In terms of assembly, part of the 30S ribosomal subunit. Contacts proteins S3 and S10. Zn(2+) serves as cofactor.

Binds 16S rRNA, required for the assembly of 30S particles and may also be responsible for determining the conformation of the 16S rRNA at the A site. The protein is Small ribosomal subunit protein uS14B of Nocardia farcinica (strain IFM 10152).